Here is a 232-residue protein sequence, read N- to C-terminus: Ribose-5-phosphate isomerase A (232 aa).

Substrate contacts are provided by residues 31–34, 87–90, and 100–103; these read TGST, DGAD, and KGGG. The active-site Proton acceptor is the Glu109. Lys127 contacts substrate.

The protein belongs to the ribose 5-phosphate isomerase family. Homodimer.

It catalyses the reaction aldehydo-D-ribose 5-phosphate = D-ribulose 5-phosphate. It participates in carbohydrate degradation; pentose phosphate pathway; D-ribose 5-phosphate from D-ribulose 5-phosphate (non-oxidative stage): step 1/1. Its function is as follows. Catalyzes the reversible conversion of ribose-5-phosphate to ribulose 5-phosphate. The chain is Ribose-5-phosphate isomerase A from Bifidobacterium longum (strain NCC 2705).